A 403-amino-acid chain; its full sequence is L-cysteine:1D-myo-inositol 2-amino-2-deoxy-alpha-D-glucopyranoside ligase (403 aa).

Cys43 is a Zn(2+) binding site. Residues 43 to 46 (CGIT), Thr58, and 81 to 83 (NTT) contribute to the L-cysteinyl-5'-AMP site. Residues 45–55 (ITPYDATHLGH) carry the 'HIGH' region motif. The 'ERGGDP' region motif lies at 183–188 (ERGGDP). Trp223 contributes to the L-cysteinyl-5'-AMP binding site. Residue Cys227 coordinates Zn(2+). 245-247 (GSD) provides a ligand contact to L-cysteinyl-5'-AMP. A Zn(2+)-binding site is contributed by His252. Position 279 (Val279) interacts with L-cysteinyl-5'-AMP. The 'KMSKS' region motif lies at 285–289 (KMSKS).

Belongs to the class-I aminoacyl-tRNA synthetase family. MshC subfamily. As to quaternary structure, monomer. Requires Zn(2+) as cofactor.

The enzyme catalyses 1D-myo-inositol 2-amino-2-deoxy-alpha-D-glucopyranoside + L-cysteine + ATP = 1D-myo-inositol 2-(L-cysteinylamino)-2-deoxy-alpha-D-glucopyranoside + AMP + diphosphate + H(+). Catalyzes the ATP-dependent condensation of GlcN-Ins and L-cysteine to form L-Cys-GlcN-Ins. This chain is L-cysteine:1D-myo-inositol 2-amino-2-deoxy-alpha-D-glucopyranoside ligase, found in Thermobispora bispora (strain ATCC 19993 / DSM 43833 / CBS 139.67 / JCM 10125 / KCTC 9307 / NBRC 14880 / R51).